Here is a 210-residue protein sequence, read N- to C-terminus: FMN-dependent NADH:quinone oxidoreductase (210 aa).

FMN contacts are provided by residues 17–19 (SRS), 102–105 (MWNL), and 148–151 (SCGG).

It belongs to the azoreductase type 1 family. As to quaternary structure, homodimer. FMN is required as a cofactor.

It carries out the reaction 2 a quinone + NADH + H(+) = 2 a 1,4-benzosemiquinone + NAD(+). The catalysed reaction is N,N-dimethyl-1,4-phenylenediamine + anthranilate + 2 NAD(+) = 2-(4-dimethylaminophenyl)diazenylbenzoate + 2 NADH + 2 H(+). Quinone reductase that provides resistance to thiol-specific stress caused by electrophilic quinones. Functionally, also exhibits azoreductase activity. Catalyzes the reductive cleavage of the azo bond in aromatic azo compounds to the corresponding amines. This is FMN-dependent NADH:quinone oxidoreductase from Trichlorobacter lovleyi (strain ATCC BAA-1151 / DSM 17278 / SZ) (Geobacter lovleyi).